The following is a 370-amino-acid chain: Queuine tRNA-ribosyltransferase (370 aa).

D89 serves as the catalytic Proton acceptor. Substrate contacts are provided by residues D89 to F93, D143, Q187, and G214. An RNA binding region spans residues G245–N251. The active-site Nucleophile is D264. The segment at T269–R273 is RNA binding; important for wobble base 34 recognition. C302, C304, C307, and H333 together coordinate Zn(2+).

This sequence belongs to the queuine tRNA-ribosyltransferase family. Homodimer. Within each dimer, one monomer is responsible for RNA recognition and catalysis, while the other monomer binds to the replacement base PreQ1. The cofactor is Zn(2+).

It carries out the reaction 7-aminomethyl-7-carbaguanine + guanosine(34) in tRNA = 7-aminomethyl-7-carbaguanosine(34) in tRNA + guanine. The protein operates within tRNA modification; tRNA-queuosine biosynthesis. In terms of biological role, catalyzes the base-exchange of a guanine (G) residue with the queuine precursor 7-aminomethyl-7-deazaguanine (PreQ1) at position 34 (anticodon wobble position) in tRNAs with GU(N) anticodons (tRNA-Asp, -Asn, -His and -Tyr). Catalysis occurs through a double-displacement mechanism. The nucleophile active site attacks the C1' of nucleotide 34 to detach the guanine base from the RNA, forming a covalent enzyme-RNA intermediate. The proton acceptor active site deprotonates the incoming PreQ1, allowing a nucleophilic attack on the C1' of the ribose to form the product. After dissociation, two additional enzymatic reactions on the tRNA convert PreQ1 to queuine (Q), resulting in the hypermodified nucleoside queuosine (7-(((4,5-cis-dihydroxy-2-cyclopenten-1-yl)amino)methyl)-7-deazaguanosine). The polypeptide is Queuine tRNA-ribosyltransferase (Hamiltonella defensa subsp. Acyrthosiphon pisum (strain 5AT)).